A 389-amino-acid chain; its full sequence is Type II methyltransferase M1.ScrFI (389 aa).

The 56-residue stretch at 16–71 folds into the HTH cro/C1-type domain; the sequence is IKEKRLRLNMTQKELADAVGMSKNGDRTIRRWENGETCPSQLEISAILRFPEIAPF. The region spanning 79 to 387 is the SAM-dependent MTase C5-type domain; that stretch reads YKMIDLFAGI…EKMLEVLEKS (309 aa). Residue Cys-149 is part of the active site.

This sequence belongs to the class I-like SAM-binding methyltransferase superfamily. C5-methyltransferase family.

The catalysed reaction is a 2'-deoxycytidine in DNA + S-adenosyl-L-methionine = a 5-methyl-2'-deoxycytidine in DNA + S-adenosyl-L-homocysteine + H(+). In terms of biological role, a methylase, recognizes the double-stranded sequence 5'-CCNGG-3', methylates C-2 on both strands, and protects the DNA from cleavage by the ScrFI endonuclease. The polypeptide is Type II methyltransferase M1.ScrFI (scrFIAM) (Lactococcus lactis subsp. cremoris (Streptococcus cremoris)).